The sequence spans 53 residues: UPF0391 membrane protein Bxeno_A1464 (53 aa).

Helical transmembrane passes span alanine 5–alanine 25 and isoleucine 30–valine 50.

The protein belongs to the UPF0391 family.

It localises to the cell membrane. The sequence is that of UPF0391 membrane protein Bxeno_A1464 from Paraburkholderia xenovorans (strain LB400).